A 261-amino-acid chain; its full sequence is Undecaprenyl-diphosphatase (261 aa).

8 helical membrane-spanning segments follow: residues 9 to 31 (ALLL…GHLT), 46 to 66 (FLKT…LLLY), 80 to 100 (IAVA…LIKG), 102 to 122 (ILGN…VLLF), 137 to 157 (ALPL…ALFP), 180 to 200 (AEFS…YDLW), 209 to 229 (GGWS…LVTV), and 240 to 260 (GFRP…FFFL).

The protein belongs to the UppP family.

Its subcellular location is the cell inner membrane. The enzyme catalyses di-trans,octa-cis-undecaprenyl diphosphate + H2O = di-trans,octa-cis-undecaprenyl phosphate + phosphate + H(+). In terms of biological role, catalyzes the dephosphorylation of undecaprenyl diphosphate (UPP). Confers resistance to bacitracin. The sequence is that of Undecaprenyl-diphosphatase from Thermus thermophilus (strain ATCC 27634 / DSM 579 / HB8).